Reading from the N-terminus, the 384-residue chain is S-adenosylmethionine synthase (384 aa).

His15 serves as a coordination point for ATP. Asp17 is a Mg(2+) binding site. Glu43 contacts K(+). Glu56 and Gln99 together coordinate L-methionine. Residues 99-109 (QSPDINQGVDR) are flexible loop. Residues 164 to 166 (DAK), 230 to 231 (RF), Asp239, 245 to 246 (RK), Ala262, and Lys266 contribute to the ATP site. Asp239 contributes to the L-methionine binding site. Residue Lys270 coordinates L-methionine.

Belongs to the AdoMet synthase family. In terms of assembly, homotetramer; dimer of dimers. Mg(2+) serves as cofactor. It depends on K(+) as a cofactor.

The protein localises to the cytoplasm. It catalyses the reaction L-methionine + ATP + H2O = S-adenosyl-L-methionine + phosphate + diphosphate. The protein operates within amino-acid biosynthesis; S-adenosyl-L-methionine biosynthesis; S-adenosyl-L-methionine from L-methionine: step 1/1. Its function is as follows. Catalyzes the formation of S-adenosylmethionine (AdoMet) from methionine and ATP. The overall synthetic reaction is composed of two sequential steps, AdoMet formation and the subsequent tripolyphosphate hydrolysis which occurs prior to release of AdoMet from the enzyme. This chain is S-adenosylmethionine synthase, found in Enterobacter sp. (strain 638).